The sequence spans 562 residues: Potassium-transporting ATPase potassium-binding subunit (562 aa).

Helical transmembrane passes span 6–26 (FLLIASFMLVLFVLSRPLGGF), 62–82 (YALAILCFNLLGIVLLFVLLM), 132–152 (GLTVQNFLSAATGIAVAFALI), 175–195 (LYVLLPIALIIALIFVSQGVL), 253–273 (FVQMLAIFLIPCALCFAFGQV), 283–303 (LIWAMSLIFIVAVVVVMYAEL), 327–347 (FGILATSLYAVVTTAASCGAV), 356–376 (ALGGMIPLWLMQIGEVVFGGV), 379–399 (GLYGMLLFVLLTVFIAGLMIG), 416–436 (MTALAILVTPTIVLLGTALAL), 483–503 (LLLAAAMFIGRFGVILPVLAI), and 524–544 (GLLFIGLLIGTVLLVGALTFI).

The protein belongs to the KdpA family. In terms of assembly, the system is composed of three essential subunits: KdpA, KdpB and KdpC.

It localises to the cell inner membrane. Functionally, part of the high-affinity ATP-driven potassium transport (or Kdp) system, which catalyzes the hydrolysis of ATP coupled with the electrogenic transport of potassium into the cytoplasm. This subunit binds the periplasmic potassium ions and delivers the ions to the membrane domain of KdpB through an intramembrane tunnel. This Yersinia pestis bv. Antiqua (strain Antiqua) protein is Potassium-transporting ATPase potassium-binding subunit.